The primary structure comprises 178 residues: Endoribonuclease YbeY (178 aa).

Zn(2+) is bound by residues histidine 118, histidine 122, and histidine 128.

It belongs to the endoribonuclease YbeY family. Zn(2+) serves as cofactor.

The protein resides in the cytoplasm. Single strand-specific metallo-endoribonuclease involved in late-stage 70S ribosome quality control and in maturation of the 3' terminus of the 16S rRNA. The sequence is that of Endoribonuclease YbeY from Mycolicibacterium gilvum (strain PYR-GCK) (Mycobacterium gilvum (strain PYR-GCK)).